Reading from the N-terminus, the 553-residue chain is Solute carrier family 45 member 3 (553 aa).

11 consecutive transmembrane segments (helical) span residues 19 to 39 (LLVN…ITYV), 52 to 72 (FMTM…PLLG), 88 to 108 (FIWA…RAGW), 120 to 140 (LELA…QVCF), 161 to 181 (FSVY…LPAI), 198 to 218 (CLFG…LFVT), 275 to 295 (FVAE…YTDF), 323 to 343 (MGSL…LVMD), 353 to 373 (SVYL…CLSH), 382 to 402 (AALT…LASL), and 522 to 542 (AYMV…TQVV).

It belongs to the glycoside-pentoside-hexuronide (GPH) cation symporter transporter (TC 2.A.2) family. Expressed in the epididymis. Primarily expressed in the prostate, but also in other tissues.

The protein resides in the membrane. The enzyme catalyses sucrose(out) + H(+)(out) = sucrose(in) + H(+)(in). Proton-associated sucrose transporter. May be able to transport also glucose and fructose. The sequence is that of Solute carrier family 45 member 3 (Slc45a3) from Mus musculus (Mouse).